The sequence spans 1569 residues: MEAQSRSTTASEKKKVENSIVKGHSRTEVSEKAVASSTTSNEDESPGQTYHRERRNAIAMQPQGGQGLGKISEEPSTSSEERASLIKKELHGSITHLPEPSVPYRGTVFAMDPRNGYIDPHYRSDLDLFPAFHPPVPIDARHHEGRYHYEPTPIPPLHVPTALASSPTYPDLPFFRISPHRNPASASDSPFSPPHPYISPYMDYIRSLHSSPSLSMISAARGLSPTDVPHAGISPAEYYHQMALLAGQRSPYADIFPSPATAGAGANALHMEYLHAMESSRFSSPRLSARPSRKRTLSISPLSDHSFDLQTMIRNSPNSLVTILNNSRSSSSASGSYGHLAASAISPALNFAYQPTPVSLQQMHQQIMSRQHSIGSAFGHSPPLLHPAPTFPSQRTIPGIPSVLNPVQVSIGPSEAAQQNKPTSESAVSSTGDLLHNKRSKVKPEEDHPSPGAVCIQDQPDGMTLVKEEGVKDESKQEAEVVYETNCHWEGCSREFDTQEQLVHHINNDHIHGEKKEFVCRWLDCSREQKPFKAQYMLVVHMRRHTGEKPHKCTFEGCSKAYSRLENLKTHLRSHTGEKPYVCEHEGCNKAFSNASDRAKHQNRTHSNEKPYVCKIPGCTKRYTDPSSLRKHVKTVHGPEAHVTKKQRGDIHPRPPPPREPGSHSQSRSPGQQTQGIHGEHKDLSNTTSKHEECLQVRSVKTEKPMSSQPSPGGKSSCSRQQSPISNYTNSGIELNLNSGGSIGDFSALDETPIMDSTISTATTGLGLHGRRVMTGTKWMEQIKVEKMKQVNGMLPRLNPVPPHRAPTLPPITGNGVQLNSNISLGGLAPVLPNRNDLSSMDITVLNMLNRRDSNTSTISSAYMSSRRSSGISPCFSSRRSSEASQFEGRVQNLSVAGSYDPISTDASRRSSETSQCDGLPTLLSLTPAQQYRLKAKYAAATGGPPPTPLPNMERMSLKTRMALLGDSRDCRLSPLPSVNVPRRCSDGGVGSYGRRHLLPNELQVNGMRRASDPVKMVSDNVSNTRVVRFNSLNNVIPPDVPPPMERRNLSLQNYTRNVYSPCPPSISENVALEAMIMEAEGNFDDEDLLPDDMVQYLNSRNQRLYETIETDALQNNAGERNGNNFEQSHVTSNVINEQFHSSEQTDLIENKNDLPIQWNEVSSGSAEYSPSRLKYGQRFPTQQNQPFGLYNNMMVQQQNVPKSGLSQQRGYQHHTQNNPQAPQQNLDLYNNSNVWSGQLGRGNQYIDDIERSSLGHSATGSLCNSAARGQKLTTNGLPMNTGQQNFGPSTHYSVQSANRAEVVQNENIINQEFMQQMTAEHLIYGMHLLGVTRSNQTTSGQNGNTTDGTRSFLSTTQNGGEQQPTLAKNFQSFVNSSGNSRQNLHRNNLPYLQEQIYDTNQHIFKVNSIKMEMQSHPQQHCANAQNFSGQLYDQTATYPQQIMKSGSEPGMEANCLLQESNNTNSSKLLSPGANHVTSTVDNIDNSLAGVQIAFAAIIDDGDHASLISGVLSPSIIQNLSRNSSRLTTPRASLTFPAIPVSTSNMAIGDMSSLLTSLAEESKFLAIMQ.

Composition is skewed to polar residues over residues 1–10 and 416–432; these read MEAQSRSTTA and AAQQNKPTSESAVSSTG. Disordered stretches follow at residues 1–79 and 414–461; these read MEAQ…STSS and SEAA…DQPD. 5 consecutive C2H2-type zinc fingers follow at residues 485–510, 518–545, 551–575, 581–606, and 612–637; these read TNCHWEGCSREFDTQEQLVHHINNDH, FVCRWLDCSREQKPFKAQYMLVVHMRRH, HKCTFEGCSKAYSRLENLKTHLRSH, YVCEHEGCNKAFSNASDRAKHQNRTH, and YVCKIPGCTKRYTDPSSLRKHVKTVH. 4 disordered regions span residues 625–731, 899–921, 1202–1228, and 1335–1364; these read DPSS…YTNS, SYDPISTDASRRSSETSQCDGLP, PKSGLSQQRGYQHHTQNNPQAPQQNLD, and SNQTTSGQNGNTTDGTRSFLSTTQNGGEQQ. The segment covering 637-653 has biased composition (basic and acidic residues); that stretch reads HGPEAHVTKKQRGDIHP. Over residues 663-676 the composition is skewed to polar residues; the sequence is SHSQSRSPGQQTQG. Over residues 678-704 the composition is skewed to basic and acidic residues; sequence HGEHKDLSNTTSKHEECLQVRSVKTEK. The span at 705–731 shows a compositional bias: polar residues; it reads PMSSQPSPGGKSSCSRQQSPISNYTNS. Positions 1335-1350 are enriched in low complexity; it reads SNQTTSGQNGNTTDGT. The segment covering 1352–1364 has biased composition (polar residues); the sequence is SFLSTTQNGGEQQ.

This sequence belongs to the GLI C2H2-type zinc-finger protein family. Phosphorylation is essential for its proteolytic processing. In terms of processing, the repressor form (GLI3R), a C-terminally truncated form is generated from the full-length GLI3 protein (GLI3FL) through proteolytic processing.

The protein localises to the nucleus. It localises to the cytoplasm. Its function is as follows. Has a dual function as a transcriptional activator and a repressor of the sonic hedgehog (Shh) pathway, and may play a role in limb development. May bind to the minimal GLI-consensus sequence 5'-GGGTGGTC-3'. Has an essential role in the early embryonic patterning of mesoderm and neuroectoderm. This Xenopus laevis (African clawed frog) protein is Zinc finger protein GLI3 (gli3).